Consider the following 353-residue polypeptide: Thiamine-phosphate synthase (353 aa).

Residues 1 to 128 (MESMPVAPST…ARTAAAVRYA (128 aa)) form a unknown region. The tract at residues 129-353 (LYDHEVRILE…ASRQLLDLLT (225 aa)) is thiamine-phosphate synthase. 4-amino-2-methyl-5-(diphosphooxymethyl)pyrimidine-binding positions include 185 to 189 (QYRRK) and asparagine 217. Residues aspartate 218 and aspartate 237 each contribute to the Mg(2+) site. Serine 256 provides a ligand contact to 4-amino-2-methyl-5-(diphosphooxymethyl)pyrimidine. A 2-[(2R,5Z)-2-carboxy-4-methylthiazol-5(2H)-ylidene]ethyl phosphate-binding site is contributed by 282–284 (TAT). Lysine 285 is a binding site for 4-amino-2-methyl-5-(diphosphooxymethyl)pyrimidine. Residues glycine 312 and 332-333 (VS) contribute to the 2-[(2R,5Z)-2-carboxy-4-methylthiazol-5(2H)-ylidene]ethyl phosphate site.

It belongs to the thiamine-phosphate synthase family. Mg(2+) is required as a cofactor.

It catalyses the reaction 2-[(2R,5Z)-2-carboxy-4-methylthiazol-5(2H)-ylidene]ethyl phosphate + 4-amino-2-methyl-5-(diphosphooxymethyl)pyrimidine + 2 H(+) = thiamine phosphate + CO2 + diphosphate. It carries out the reaction 2-(2-carboxy-4-methylthiazol-5-yl)ethyl phosphate + 4-amino-2-methyl-5-(diphosphooxymethyl)pyrimidine + 2 H(+) = thiamine phosphate + CO2 + diphosphate. The catalysed reaction is 4-methyl-5-(2-phosphooxyethyl)-thiazole + 4-amino-2-methyl-5-(diphosphooxymethyl)pyrimidine + H(+) = thiamine phosphate + diphosphate. It functions in the pathway cofactor biosynthesis; thiamine diphosphate biosynthesis; thiamine phosphate from 4-amino-2-methyl-5-diphosphomethylpyrimidine and 4-methyl-5-(2-phosphoethyl)-thiazole: step 1/1. Condenses 4-methyl-5-(beta-hydroxyethyl)thiazole monophosphate (THZ-P) and 2-methyl-4-amino-5-hydroxymethyl pyrimidine pyrophosphate (HMP-PP) to form thiamine monophosphate (TMP). The polypeptide is Thiamine-phosphate synthase (Synechococcus sp. (strain WH7803)).